Consider the following 247-residue polypeptide: DNA polymerase sliding clamp (247 aa).

The protein belongs to the PCNA family. In terms of assembly, homotrimer. The subunits circularize to form a toroid; DNA passes through its center. Replication factor C (RFC) is required to load the toroid on the DNA.

Its function is as follows. Sliding clamp subunit that acts as a moving platform for DNA processing. Responsible for tethering the catalytic subunit of DNA polymerase and other proteins to DNA during high-speed replication. The protein is DNA polymerase sliding clamp of Methanosphaerula palustris (strain ATCC BAA-1556 / DSM 19958 / E1-9c).